The following is a 227-amino-acid chain: General transcription factor 3C polypeptide 6 (227 aa).

Positions 157–227 (DEAAGPASDK…DGNVSQNNQS (71 aa)) are disordered. A compositionally biased stretch (basic and acidic residues) spans 186-195 (EQEKVEHSEV). Residues 203–227 (ETPSEMESSVFMGTQDGNVSQNNQS) are compositionally biased toward polar residues.

Belongs to the TFIIIC subunit 6 family. Part of the TFIIIC subcomplex TFIIIC2, consisting of six subunits, GTF3C1, GTF3C2, GTF3C3, GTF3C4, GTF3C5 and GTF3C6. Interacts with GTF3C4 and GTF3C5.

It is found in the nucleus. Involved in RNA polymerase III-mediated transcription. Integral, tightly associated component of the DNA-binding TFIIIC2 subcomplex that directly binds tRNA and virus-associated RNA promoters. The sequence is that of General transcription factor 3C polypeptide 6 from Mus musculus (Mouse).